Consider the following 608-residue polypeptide: Phosphogluconate dehydratase (608 aa).

Positions 154 and 221 each coordinate [4Fe-4S] cluster.

Belongs to the IlvD/Edd family. Requires [4Fe-4S] cluster as cofactor.

It catalyses the reaction 6-phospho-D-gluconate = 2-dehydro-3-deoxy-6-phospho-D-gluconate + H2O. Its pathway is carbohydrate metabolism; Entner-Doudoroff pathway. Catalyzes the dehydration of 6-phospho-D-gluconate to 2-dehydro-3-deoxy-6-phospho-D-gluconate. The sequence is that of Phosphogluconate dehydratase from Pseudomonas aeruginosa (strain ATCC 15692 / DSM 22644 / CIP 104116 / JCM 14847 / LMG 12228 / 1C / PRS 101 / PAO1).